Consider the following 184-residue polypeptide: Alpha-tubulin N-acetyltransferase (184 aa).

Residues 1–174 (MNIPPEKMHN…NNFVIFAEYF (174 aa)) form the N-acetyltransferase domain. Acetyl-CoA contacts are provided by residues 108 to 121 (FYIQ…GLGL) and 144 to 153 (SYKLQSFLKK).

Belongs to the acetyltransferase ATAT1 family.

It carries out the reaction L-lysyl-[alpha-tubulin] + acetyl-CoA = N(6)-acetyl-L-lysyl-[alpha-tubulin] + CoA + H(+). In terms of biological role, specifically acetylates 'Lys-40' in alpha-tubulin on the lumenal side of microtubules. Promotes microtubule destabilization and accelerates microtubule dynamics; this activity may be independent of acetylation activity. Acetylates alpha-tubulin with a slow enzymatic rate, due to a catalytic site that is not optimized for acetyl transfer. Enters the microtubule through each end and diffuses quickly throughout the lumen of microtubules. Acetylates only long/old microtubules because of its slow acetylation rate since it does not have time to act on dynamically unstable microtubules before the enzyme is released. In Plasmodium knowlesi (strain H), this protein is Alpha-tubulin N-acetyltransferase.